Reading from the N-terminus, the 508-residue chain is Lysine--tRNA ligase (508 aa).

Residues Glu416 and Glu423 each contribute to the Mg(2+) site.

The protein belongs to the class-II aminoacyl-tRNA synthetase family. As to quaternary structure, homodimer. Mg(2+) is required as a cofactor.

It is found in the cytoplasm. The catalysed reaction is tRNA(Lys) + L-lysine + ATP = L-lysyl-tRNA(Lys) + AMP + diphosphate. The chain is Lysine--tRNA ligase from Prochlorococcus marinus (strain MIT 9303).